The primary structure comprises 182 residues: MSNTIETGLPEDWEVRHSQSKNLPYYFNSATKTSRWEPPSGTDVDKLKIYMAKYHSPTSQQQQQQQQQQPQGKIRCAHLLVKHNQSRRPSSWRESEITRTKQEALTTLQGFEQRIKSGSISLGELALTESDCSSARKRGDLGYFGRGDMQKEFEDAAFALKPGEISGIVDTASGLHLIERLE.

Residues Thr-7–Gly-41 form the WW domain. Positions Gln-71–Glu-182 constitute a PpiC domain.

It catalyses the reaction [protein]-peptidylproline (omega=180) = [protein]-peptidylproline (omega=0). In terms of biological role, site-specific PPIase with respect to the amino acid N-terminal to the proline residue. Peptides with glutamate, phosphoserine, or phosphothreonine in the -1 position are the best substrates. It is not only able to isomerize small peptides but is also active in protein folding. This is Peptidyl-prolyl cis-trans isomerase ssp-1 (ssp-1) from Neurospora crassa (strain ATCC 24698 / 74-OR23-1A / CBS 708.71 / DSM 1257 / FGSC 987).